The chain runs to 131 residues: Protein Turandot M (131 aa).

The N-terminal stretch at 1–23 (MNPAIYLSCLVVFSLLLLGKVNA) is a signal peptide.

Belongs to the Turandot family.

It localises to the secreted. Functionally, a humoral factor that may play a role in stress tolerance. Requires Mekk1 expression in the fat body to regulate response to septic injury and consequent immune response. This chain is Protein Turandot M, found in Drosophila erecta (Fruit fly).